A 134-amino-acid polypeptide reads, in one-letter code: 4-carboxymuconolactone decarboxylase (134 aa).

Belongs to the carboxymuconolactone decarboxylase family.

The enzyme catalyses (R)-2-(carboxymethyl)-5-oxo-2,5-dihydro-2-furoate + H(+) = (4,5-dihydro-5-oxofuran-2-yl)-acetate + CO2. It functions in the pathway aromatic compound metabolism; beta-ketoadipate pathway; 5-oxo-4,5-dihydro-2-furylacetate from 3-carboxy-cis,cis-muconate: step 2/2. This chain is 4-carboxymuconolactone decarboxylase (pcaC), found in Acinetobacter baylyi (strain ATCC 33305 / BD413 / ADP1).